Reading from the N-terminus, the 85-residue chain is Large ribosomal subunit protein bL27 (85 aa).

A disordered region spans residues 1–23 (MAHKKGQGSTQNNRDSAGRRLGV).

The protein belongs to the bacterial ribosomal protein bL27 family.

This Helicobacter hepaticus (strain ATCC 51449 / 3B1) protein is Large ribosomal subunit protein bL27.